The chain runs to 301 residues: Probable serine acetyltransferase 3 (301 aa).

The segment at 280-301 (IGKKAEPQRELPGVTMEQRWSD) is disordered.

The protein belongs to the transferase hexapeptide repeat family. Homomultimer.

It catalyses the reaction L-serine + acetyl-CoA = O-acetyl-L-serine + CoA. It functions in the pathway amino-acid biosynthesis; L-cysteine biosynthesis; L-cysteine from L-serine: step 1/2. The sequence is that of Probable serine acetyltransferase 3 (SAT3) from Oryza sativa subsp. japonica (Rice).